Here is a 288-residue protein sequence, read N- to C-terminus: Pyridoxal kinase PdxY (288 aa).

Substrate contacts are provided by residues S10 and 45–46; that span reads TQ. Residues D112, A143, E148, and K181 each contribute to the ATP site. Residue D222 coordinates substrate.

It belongs to the pyridoxine kinase family. PdxY subfamily. As to quaternary structure, homodimer. Requires Mg(2+) as cofactor.

It catalyses the reaction pyridoxal + ATP = pyridoxal 5'-phosphate + ADP + H(+). Its pathway is cofactor metabolism; pyridoxal 5'-phosphate salvage; pyridoxal 5'-phosphate from pyridoxal: step 1/1. Pyridoxal kinase involved in the salvage pathway of pyridoxal 5'-phosphate (PLP). Catalyzes the phosphorylation of pyridoxal to PLP. The protein is Pyridoxal kinase PdxY of Paraburkholderia xenovorans (strain LB400).